The following is a 137-amino-acid chain: Cytochrome c-type biogenesis protein CcmE (137 aa).

Over 1 to 8 (MQKGAKNR) the chain is Cytoplasmic. A helical; Signal-anchor for type II membrane protein membrane pass occupies residues 9-29 (LITIIICFCSAVIGVSIILYN). The Periplasmic segment spans residues 30-137 (LEKSIVFFVP…NTVIPAKAGI (108 aa)). Heme contacts are provided by His-120 and Tyr-124.

The protein belongs to the CcmE/CycJ family.

It is found in the cell inner membrane. Its function is as follows. Heme chaperone required for the biogenesis of c-type cytochromes. Transiently binds heme delivered by CcmC and transfers the heme to apo-cytochromes in a process facilitated by CcmF and CcmH. In Rickettsia bellii (strain OSU 85-389), this protein is Cytochrome c-type biogenesis protein CcmE.